The sequence spans 642 residues: 1,4-alpha-glucan branching enzyme GlgB (642 aa).

Asp-304 acts as the Nucleophile in catalysis. Catalysis depends on Glu-355, which acts as the Proton donor.

This sequence belongs to the glycosyl hydrolase 13 family. GlgB subfamily. As to quaternary structure, monomer.

It catalyses the reaction Transfers a segment of a (1-&gt;4)-alpha-D-glucan chain to a primary hydroxy group in a similar glucan chain.. It functions in the pathway glycan biosynthesis; glycogen biosynthesis. In terms of biological role, catalyzes the formation of the alpha-1,6-glucosidic linkages in glycogen by scission of a 1,4-alpha-linked oligosaccharide from growing alpha-1,4-glucan chains and the subsequent attachment of the oligosaccharide to the alpha-1,6 position. This Streptococcus pneumoniae serotype 4 (strain ATCC BAA-334 / TIGR4) protein is 1,4-alpha-glucan branching enzyme GlgB.